The sequence spans 400 residues: Enoyl-[acyl-carrier-protein] reductase [NADH] (400 aa).

Residues 48–53 (GASTGY), 74–75 (FE), 111–112 (DA), and 139–140 (LA) contribute to the NAD(+) site. Residue Tyr-225 coordinates substrate. Tyr-235 acts as the Proton donor in catalysis. NAD(+) is bound by residues Lys-244 and 273–275 (VVT).

Belongs to the TER reductase family. As to quaternary structure, monomer.

The enzyme catalyses a 2,3-saturated acyl-[ACP] + NAD(+) = a (2E)-enoyl-[ACP] + NADH + H(+). Its pathway is lipid metabolism; fatty acid biosynthesis. In terms of biological role, involved in the final reduction of the elongation cycle of fatty acid synthesis (FAS II). Catalyzes the reduction of a carbon-carbon double bond in an enoyl moiety that is covalently linked to an acyl carrier protein (ACP). This chain is Enoyl-[acyl-carrier-protein] reductase [NADH], found in Burkholderia multivorans (strain ATCC 17616 / 249).